We begin with the raw amino-acid sequence, 507 residues long: Maturase K (507 aa).

This sequence belongs to the intron maturase 2 family. MatK subfamily.

It is found in the plastid. Its subcellular location is the chloroplast. In terms of biological role, usually encoded in the trnK tRNA gene intron. Probably assists in splicing its own and other chloroplast group II introns. The polypeptide is Maturase K (Cryptomeria japonica (Japanese cedar)).